The sequence spans 483 residues: Spermatogenesis-defective protein 39 homolog (483 aa).

The protein belongs to the SPE39 family. Interacts with vps33b. As to expression, high levels detected in liver and small intestine of larvae at 5 days post-fertilization.

It localises to the cytoplasm. Its subcellular location is the cytoplasmic vesicle. The protein resides in the early endosome. It is found in the recycling endosome. The protein localises to the late endosome. Functionally, proposed to be involved in endosomal maturation implicating in part vps33b. In epithelial cells, the vps33b:vipas39 complex may play a role in the apical rab11a-dependent recycling pathway and in the maintenance of the apical-basolateral polarity. May play a role in lysosomal trafficking, probably via association with the core HOPS complex in a discrete population of endosomes; the functions seems to be independent of vps33b. May play a role in vesicular trafficking during spermatogenesis. May be involved in direct or indirect transcriptional regulation of E-cadherin. This chain is Spermatogenesis-defective protein 39 homolog (vipas39), found in Danio rerio (Zebrafish).